Here is a 350-residue protein sequence, read N- to C-terminus: UDP-glucose 4-epimerase GEPI48 (350 aa).

NAD(+) is bound at residue 5–36 (TVLVTGGAGYIGSHTVLQLLLGGFKAVVVDNL). Position 130 (Ser-130) interacts with substrate. Tyr-154 acts as the Proton acceptor in catalysis.

This sequence belongs to the NAD(P)-dependent epimerase/dehydratase family. Requires NAD(+) as cofactor.

It catalyses the reaction UDP-alpha-D-glucose = UDP-alpha-D-galactose. The protein operates within carbohydrate metabolism; galactose metabolism. The chain is UDP-glucose 4-epimerase GEPI48 from Cyamopsis tetragonoloba (Guar).